A 147-amino-acid polypeptide reads, in one-letter code: Protein phosphatase 1 regulatory subunit 14A (147 aa).

Residues 1–11 (MAAQRLGKRVL) are compositionally biased toward basic residues. Positions 1-37 (MAAQRLGKRVLSKLQSPSRARGPGGSPSGLQKRHARV) are disordered. Residue Ser26 is modified to Phosphoserine. Residues 35–120 (ARVTVKYDRR…LLAKLRGLHK (86 aa)) are inhibitory. Thr38 is subject to Phosphothreonine. The tract at residues 118 to 147 (LHKQPGFPQPSPSDDPSLSPRQDPAHTAPP) is disordered. 3 positions are modified to phosphoserine: Ser128, Ser134, and Ser136.

The protein belongs to the PP1 inhibitor family.

The protein localises to the cytoplasm. Functionally, inhibitor of PPP1CA. Has over 1000-fold higher inhibitory activity when phosphorylated, creating a molecular switch for regulating the phosphorylation status of PPP1CA substrates and smooth muscle contraction. The polypeptide is Protein phosphatase 1 regulatory subunit 14A (Ppp1r14a) (Rattus norvegicus (Rat)).